A 140-amino-acid polypeptide reads, in one-letter code: Large ribosomal subunit protein bL17 (140 aa).

The protein belongs to the bacterial ribosomal protein bL17 family. In terms of assembly, part of the 50S ribosomal subunit. Contacts protein L32.

This Beijerinckia indica subsp. indica (strain ATCC 9039 / DSM 1715 / NCIMB 8712) protein is Large ribosomal subunit protein bL17.